We begin with the raw amino-acid sequence, 422 residues long: MGKAMLRAGFADTNSSNMNESFARLHFAGGYLPSDSKDWRTIIPSLLMAVCLVGLVGNLCVIGILLHGVWKRKPSTIHSLILNLSLADFSLLLFSAPVRAAAYSKGVWDLGWFICKSSDWFTHVCMAAKSLTFVVVAKACFAYASDPAKQESIHSRTIWSVLAGIWVVASLLPLPEWLFSTTRRHAGVEMCLVDVPAVAEEFMSMFGKLYPLLVFCLPLLLAGVYFWRAYDQCKTRCTKTRNLRDQMRSKQLTVMLLSTAIISALLWLPEWIAWLWVWHVKAGGPMPPQGFIALSQVLMFFTSTANPLIFLVMSEEFKAGLKGLWKWMITRKPAVTSEVQEAPAGNTEALPGKAPSPETQTCILDTDGRGSPDDSKEKSGKVVAPILPDVEQFWHERDAVPSAQDNDPIPWEHEGQETEGCN.

The Extracellular segment spans residues 1 to 45 (MGKAMLRAGFADTNSSNMNESFARLHFAGGYLPSDSKDWRTIIPS). N-linked (GlcNAc...) asparagine glycans are attached at residues asparagine 14 and asparagine 19. The helical transmembrane segment at 46–66 (LLMAVCLVGLVGNLCVIGILL) threads the bilayer. Residues 67-76 (HGVWKRKPST) are Cytoplasmic-facing. Residues 77-97 (IHSLILNLSLADFSLLLFSAP) traverse the membrane as a helical segment. Residues 98–123 (VRAAAYSKGVWDLGWFICKSSDWFTH) lie on the Extracellular side of the membrane. Cysteine 115 and cysteine 191 are joined by a disulfide. Residues 124–144 (VCMAAKSLTFVVVAKACFAYA) form a helical membrane-spanning segment. At 145–157 (SDPAKQESIHSRT) the chain is on the cytoplasmic side. A helical membrane pass occupies residues 158–178 (IWSVLAGIWVVASLLPLPEWL). Residues 179–205 (FSTTRRHAGVEMCLVDVPAVAEEFMSM) lie on the Extracellular side of the membrane. The helical transmembrane segment at 206 to 226 (FGKLYPLLVFCLPLLLAGVYF) threads the bilayer. The Cytoplasmic segment spans residues 227 to 259 (WRAYDQCKTRCTKTRNLRDQMRSKQLTVMLLST). The helical transmembrane segment at 260–280 (AIISALLWLPEWIAWLWVWHV) threads the bilayer. Over 281–290 (KAGGPMPPQG) the chain is Extracellular. The helical transmembrane segment at 291–311 (FIALSQVLMFFTSTANPLIFL) threads the bilayer. The Cytoplasmic segment spans residues 312–422 (VMSEEFKAGL…HEGQETEGCN (111 aa)). Residues 339-422 (VQEAPAGNTE…HEGQETEGCN (84 aa)) form a disordered region. The span at 366–380 (TDGRGSPDDSKEKSG) shows a compositional bias: basic and acidic residues.

High expression in the brain and lower levels in kidney and liver. In the nervous system expressed specifically in the habenular area (at protein level).

It is found in the cell membrane. Functionally, proton-sensing G-protein coupled receptor. The chain is G-protein coupled receptor 151 protein (Gpr151) from Mus musculus (Mouse).